The following is a 261-amino-acid chain: Cytochrome c oxidase subunit 3 (261 aa).

Residues 1 to 15 (MTHQLHQYHLVDPSP) are Mitochondrial matrix-facing. The chain crosses the membrane as a helical span at residues 16–34 (WPLTGAMGSLLLASGLAVW). The Mitochondrial intermembrane segment spans residues 35–40 (FHTNNT). A helical membrane pass occupies residues 41-66 (MLLKFGLLTLLLTMFQWWRDIIREST). At 67 to 72 (YQGHHT) the chain is on the mitochondrial matrix side. A helical transmembrane segment spans residues 73-105 (SGVQKNMRYGMILFITSEVFFFLGFFWALYHVS). The Mitochondrial intermembrane portion of the chain corresponds to 106–128 (LVPTPELGAEWPPIGITPLNPME). The chain crosses the membrane as a helical span at residues 129–152 (VPLLNTAVLLSSGATITWSHHTMM). The Mitochondrial matrix segment spans residues 153–155 (KGN). A helical transmembrane segment spans residues 156–183 (KKEATHALMLTIILGAYFTALQLSEYME). Topologically, residues 184 to 190 (TPFTIAD) are mitochondrial intermembrane. A helical membrane pass occupies residues 191–223 (SVYGSLFFVATGFHGLHVMIGTSFLMVCALRLA). Topologically, residues 224 to 232 (KHHFTITHH) are mitochondrial matrix. Residues 233–256 (FGYEAAIWYWHFVDIVWLFLYISV) form a helical membrane-spanning segment. Residues 257–261 (YWWGS) lie on the Mitochondrial intermembrane side of the membrane.

This sequence belongs to the cytochrome c oxidase subunit 3 family. Component of the cytochrome c oxidase (complex IV, CIV), a multisubunit enzyme composed of 14 subunits. The complex is composed of a catalytic core of 3 subunits MT-CO1, MT-CO2 and MT-CO3, encoded in the mitochondrial DNA, and 11 supernumerary subunits COX4I, COX5A, COX5B, COX6A, COX6B, COX6C, COX7A, COX7B, COX7C, COX8 and NDUFA4, which are encoded in the nuclear genome. The complex exists as a monomer or a dimer and forms supercomplexes (SCs) in the inner mitochondrial membrane with NADH-ubiquinone oxidoreductase (complex I, CI) and ubiquinol-cytochrome c oxidoreductase (cytochrome b-c1 complex, complex III, CIII), resulting in different assemblies (supercomplex SCI(1)III(2)IV(1) and megacomplex MCI(2)III(2)IV(2)).

It localises to the mitochondrion inner membrane. The catalysed reaction is 4 Fe(II)-[cytochrome c] + O2 + 8 H(+)(in) = 4 Fe(III)-[cytochrome c] + 2 H2O + 4 H(+)(out). Component of the cytochrome c oxidase, the last enzyme in the mitochondrial electron transport chain which drives oxidative phosphorylation. The respiratory chain contains 3 multisubunit complexes succinate dehydrogenase (complex II, CII), ubiquinol-cytochrome c oxidoreductase (cytochrome b-c1 complex, complex III, CIII) and cytochrome c oxidase (complex IV, CIV), that cooperate to transfer electrons derived from NADH and succinate to molecular oxygen, creating an electrochemical gradient over the inner membrane that drives transmembrane transport and the ATP synthase. Cytochrome c oxidase is the component of the respiratory chain that catalyzes the reduction of oxygen to water. Electrons originating from reduced cytochrome c in the intermembrane space (IMS) are transferred via the dinuclear copper A center (CU(A)) of subunit 2 and heme A of subunit 1 to the active site in subunit 1, a binuclear center (BNC) formed by heme A3 and copper B (CU(B)). The BNC reduces molecular oxygen to 2 water molecules using 4 electrons from cytochrome c in the IMS and 4 protons from the mitochondrial matrix. In Lycodon semicarinatus (Ryukyu odd-tooth snake), this protein is Cytochrome c oxidase subunit 3 (MT-CO3).